Reading from the N-terminus, the 374-residue chain is Queuine tRNA-ribosyltransferase (374 aa).

The Proton acceptor role is filled by aspartate 89. Residues 89–93 (DSGGF), aspartate 143, glutamine 187, and glycine 214 contribute to the substrate site. The segment at 245 to 251 (GVGKPED) is RNA binding. The active-site Nucleophile is the aspartate 264. The tract at residues 269 to 273 (TRNAR) is RNA binding; important for wobble base 34 recognition. 4 residues coordinate Zn(2+): cysteine 302, cysteine 304, cysteine 307, and histidine 333.

The protein belongs to the queuine tRNA-ribosyltransferase family. In terms of assembly, homodimer. Within each dimer, one monomer is responsible for RNA recognition and catalysis, while the other monomer binds to the replacement base PreQ1. Requires Zn(2+) as cofactor.

The catalysed reaction is 7-aminomethyl-7-carbaguanine + guanosine(34) in tRNA = 7-aminomethyl-7-carbaguanosine(34) in tRNA + guanine. It participates in tRNA modification; tRNA-queuosine biosynthesis. Functionally, catalyzes the base-exchange of a guanine (G) residue with the queuine precursor 7-aminomethyl-7-deazaguanine (PreQ1) at position 34 (anticodon wobble position) in tRNAs with GU(N) anticodons (tRNA-Asp, -Asn, -His and -Tyr). Catalysis occurs through a double-displacement mechanism. The nucleophile active site attacks the C1' of nucleotide 34 to detach the guanine base from the RNA, forming a covalent enzyme-RNA intermediate. The proton acceptor active site deprotonates the incoming PreQ1, allowing a nucleophilic attack on the C1' of the ribose to form the product. After dissociation, two additional enzymatic reactions on the tRNA convert PreQ1 to queuine (Q), resulting in the hypermodified nucleoside queuosine (7-(((4,5-cis-dihydroxy-2-cyclopenten-1-yl)amino)methyl)-7-deazaguanosine). The chain is Queuine tRNA-ribosyltransferase from Shewanella sp. (strain MR-4).